A 347-amino-acid chain; its full sequence is Bombesin receptor-activated protein C6orf89 (347 aa).

The Cytoplasmic segment spans residues 1 to 58 (MDLAANEISIYDKLSETVDLVRQTGHQCGMSEKAIEKFIRQLLEKNEPQRPPPQYPLL). The helical transmembrane segment at 59–79 (IVVYKVLATLGLILLTAYFVI) threads the bilayer. Residues 80-347 (QPFSPLAPEP…ICDGTAFSEL (268 aa)) lie on the Extracellular side of the membrane.

Homodimer. Interacts with BRS3. Interacts (via N-terminus) with SIN3B. Post-translationally, glycosylated.

It is found in the golgi apparatus membrane. Its subcellular location is the midbody. The protein localises to the cytoplasm. The protein resides in the nucleus. It localises to the nucleolus. In terms of biological role, exhibits histone deacetylase (HDAC) enhancer properties. May play a role in cell cycle progression and wound repair of bronchial epithelial cells. In Homo sapiens (Human), this protein is Bombesin receptor-activated protein C6orf89 (C6orf89).